The primary structure comprises 507 residues: Lysine--tRNA ligase (507 aa).

E416 and E423 together coordinate Mg(2+).

Belongs to the class-II aminoacyl-tRNA synthetase family. Homodimer. Mg(2+) serves as cofactor.

The protein resides in the cytoplasm. It catalyses the reaction tRNA(Lys) + L-lysine + ATP = L-lysyl-tRNA(Lys) + AMP + diphosphate. The sequence is that of Lysine--tRNA ligase from Hahella chejuensis (strain KCTC 2396).